A 308-amino-acid chain; its full sequence is Glutaminase (308 aa).

7 residues coordinate substrate: Ser-66, Asn-117, Glu-161, Asn-168, Tyr-192, Tyr-244, and Val-262.

It belongs to the glutaminase family. Homotetramer.

The catalysed reaction is L-glutamine + H2O = L-glutamate + NH4(+). This is Glutaminase from Salmonella dublin (strain CT_02021853).